The following is a 453-amino-acid chain: Chromosomal replication initiator protein DnaA (453 aa).

The tract at residues 1–71 (MSEKEIWEKV…QAILFDVVGY (71 aa)) is domain I, interacts with DnaA modulators. The tract at residues 71-114 (YEVKPHFITTEELANYSNNETATPKEATKPSTETTEDNHVLGRE) is domain II. A domain III, AAA+ region region spans residues 115–331 (QFNAHNTFDT…GALTRLLAYS (217 aa)). Gly-159, Gly-161, Lys-162, and Thr-163 together coordinate ATP. Residues 332–453 (QLLGKPITTE…ENLEKEIRNV (122 aa)) form a domain IV, binds dsDNA region.

This sequence belongs to the DnaA family. As to quaternary structure, oligomerizes as a right-handed, spiral filament on DNA at oriC.

The protein localises to the cytoplasm. Plays an essential role in the initiation and regulation of chromosomal replication. ATP-DnaA binds to the origin of replication (oriC) to initiate formation of the DNA replication initiation complex once per cell cycle. Binds the DnaA box (a 9 base pair repeat at the origin) and separates the double-stranded (ds)DNA. Forms a right-handed helical filament on oriC DNA; dsDNA binds to the exterior of the filament while single-stranded (ss)DNA is stabiized in the filament's interior. The ATP-DnaA-oriC complex binds and stabilizes one strand of the AT-rich DNA unwinding element (DUE), permitting loading of DNA polymerase. After initiation quickly degrades to an ADP-DnaA complex that is not apt for DNA replication. Binds acidic phospholipids. This Staphylococcus aureus (strain MRSA252) protein is Chromosomal replication initiator protein DnaA.